The sequence spans 364 residues: Aminomethyltransferase (364 aa).

This sequence belongs to the GcvT family. In terms of assembly, the glycine cleavage system is composed of four proteins: P, T, L and H.

It catalyses the reaction N(6)-[(R)-S(8)-aminomethyldihydrolipoyl]-L-lysyl-[protein] + (6S)-5,6,7,8-tetrahydrofolate = N(6)-[(R)-dihydrolipoyl]-L-lysyl-[protein] + (6R)-5,10-methylene-5,6,7,8-tetrahydrofolate + NH4(+). In terms of biological role, the glycine cleavage system catalyzes the degradation of glycine. This Shewanella oneidensis (strain ATCC 700550 / JCM 31522 / CIP 106686 / LMG 19005 / NCIMB 14063 / MR-1) protein is Aminomethyltransferase.